We begin with the raw amino-acid sequence, 735 residues long: Exocyst complex component 7 (735 aa).

Coiled-coil stretches lie at residues 5 to 42 (QEASARRREIEDKLKQEEETLSFIRDSLEKSDQLTKNM) and 63 to 85 (VHKQTENLQRLQENVEKTLSCLD). Ser133 is modified (phosphoserine). A disordered region spans residues 239 to 268 (HKSSSSSGVPYSPAIPNKRKDTPTKKPVKR).

The protein belongs to the EXO70 family. The exocyst complex is composed of EXOC1, EXOC2, EXOC3, EXOC4, EXOC5, EXOC6, EXOC7 and EXOC8. Interacts with ARHQ in a GTP-dependent manner. Interacts with RAB11FIP3. In terms of tissue distribution, abundant in the ventricular zone, the outer subventricular zone and the cortical plate of the fetal cortex.

The protein resides in the cytoplasm. Its subcellular location is the cytosol. The protein localises to the cell membrane. It is found in the midbody. It localises to the midbody ring. Its function is as follows. Component of the exocyst complex involved in the docking of exocytic vesicles with fusion sites on the plasma membrane. In adipocytes, plays a crucial role in targeting SLC2A4 vesicle to the plasma membrane in response to insulin, perhaps directing the vesicle to the precise site of fusion. It is required for neuron survival and plays an essential role in cortical development. In Homo sapiens (Human), this protein is Exocyst complex component 7 (EXOC7).